The sequence spans 103 residues: Small ribosomal subunit protein uS10 (103 aa).

The protein belongs to the universal ribosomal protein uS10 family. In terms of assembly, part of the 30S ribosomal subunit.

Involved in the binding of tRNA to the ribosomes. The polypeptide is Small ribosomal subunit protein uS10 (Ruthia magnifica subsp. Calyptogena magnifica).